The following is a 564-amino-acid chain: Isopullulanase (564 aa).

A signal peptide spans 1–19; that stretch reads MRSTGYLLTLSAAFQVAQA. Asparagine 24, asparagine 94, asparagine 115, asparagine 138, asparagine 186, asparagine 210, asparagine 305, asparagine 381, asparagine 448, asparagine 455, asparagine 460, asparagine 486, asparagine 491, asparagine 503, and asparagine 535 each carry an N-linked (GlcNAc...) asparagine glycan.

In terms of processing, N-glycosylated.

It is found in the secreted. It catalyses the reaction Hydrolysis of pullulan to isopanose (6-alpha-maltosylglucose).. Its function is as follows. Hydrolyzes pullulan, a linear polymer which is composed of maltotriose units with alpha-1,6 glucosidic linkages, to produce isopanose (Glca1-4Glca1-6Glc). The protein is Isopullulanase (ipuA) of Aspergillus niger.